We begin with the raw amino-acid sequence, 304 residues long: Acetyl-coenzyme A carboxylase carboxyl transferase subunit beta (304 aa).

Residues 23 to 292 (VWTKCDSCGQ…PNPDAPREGV (270 aa)) enclose the CoA carboxyltransferase N-terminal domain. Residues Cys-27, Cys-30, Cys-46, and Cys-49 each coordinate Zn(2+). The C4-type zinc finger occupies 27 to 49 (CDSCGQVLYRAELERNLEVCPKC). The interval 283–304 (PNPDAPREGVVVPPAPDQESEA) is disordered.

The protein belongs to the AccD/PCCB family. In terms of assembly, acetyl-CoA carboxylase is a heterohexamer composed of biotin carboxyl carrier protein (AccB), biotin carboxylase (AccC) and two subunits each of ACCase subunit alpha (AccA) and ACCase subunit beta (AccD). Zn(2+) is required as a cofactor.

It localises to the cytoplasm. It catalyses the reaction N(6)-carboxybiotinyl-L-lysyl-[protein] + acetyl-CoA = N(6)-biotinyl-L-lysyl-[protein] + malonyl-CoA. It participates in lipid metabolism; malonyl-CoA biosynthesis; malonyl-CoA from acetyl-CoA: step 1/1. Functionally, component of the acetyl coenzyme A carboxylase (ACC) complex. Biotin carboxylase (BC) catalyzes the carboxylation of biotin on its carrier protein (BCCP) and then the CO(2) group is transferred by the transcarboxylase to acetyl-CoA to form malonyl-CoA. The chain is Acetyl-coenzyme A carboxylase carboxyl transferase subunit beta from Salmonella agona (strain SL483).